The chain runs to 387 residues: 3-hydroxy-D-aspartate aldolase (387 aa).

An N6-(pyridoxal phosphate)lysine modification is found at Lys-62. Pyridoxal 5'-phosphate is bound by residues Gln-85, Thr-238, 256–257 (GS), and Tyr-265. His-355 and Asp-357 together coordinate Mg(2+).

This sequence belongs to the DSD1 family. In terms of assembly, homodimer. The cofactor is pyridoxal 5'-phosphate. Mg(2+) is required as a cofactor.

It carries out the reaction (3S)-3-hydroxy-D-aspartate = glyoxylate + glycine. It catalyses the reaction (3R)-3-hydroxy-D-aspartate = glyoxylate + glycine. Its function is as follows. Catalyzes the condensation of glyoxylate and glycine into (2R,3S)-beta-hydroxyaspartate ((3S)-3-hydroxy-D-aspartate). Is essential for the growth of P.denitrificans in the presence of glycolate and glyoxylate since it functions in glyoxylate assimilation via the beta-hydroxyaspartate cycle (BHAC). Is also able to catalyze the reverse reaction in vitro, i.e. the cleavage of (3S)-3-hydroxy-D-aspartate, and that of D-threonine to a lesser extent. In Paracoccus denitrificans (strain Pd 1222), this protein is 3-hydroxy-D-aspartate aldolase.